We begin with the raw amino-acid sequence, 130 residues long: Gloverin (130 aa).

As to expression, hemolymph.

The protein resides in the secreted. Antibacterial protein active against Gram-negative bacteria. This chain is Gloverin, found in Hyalophora cecropia (Cecropia moth).